The following is a 265-amino-acid chain: Undecaprenyl-diphosphatase 1 (265 aa).

Transmembrane regions (helical) follow at residues 4–24 (IITA…PISS), 42–62 (AKTF…ILYH), 84–104 (FHVF…HDVI), 108–128 (LFQP…MIFA), 184–204 (SEFS…LDLL), 217–237 (MFAV…VTFL), and 245–265 (LKPF…FVLL).

Belongs to the UppP family.

It localises to the cell membrane. It carries out the reaction di-trans,octa-cis-undecaprenyl diphosphate + H2O = di-trans,octa-cis-undecaprenyl phosphate + phosphate + H(+). Catalyzes the dephosphorylation of undecaprenyl diphosphate (UPP). Confers resistance to bacitracin. In Bacillus anthracis, this protein is Undecaprenyl-diphosphatase 1.